A 242-amino-acid chain; its full sequence is N-glycosylase/DNA lyase (242 aa).

Residues Gln-25, Ser-52, and Trp-63 each contribute to the 8-oxoguanine site. The tract at residues 119 to 183 (KSYYRDMNRL…VDARIERITR (65 aa)) is helix-hairpin-helix. Catalysis depends on Lys-143, which acts as the Schiff-base intermediate with DNA. Residues Phe-147 and Pro-173 each contribute to the 8-oxoguanine site. Asp-175 is a catalytic residue. The 8-oxoguanine site is built by Asp-209 and Trp-213.

This sequence belongs to the archaeal N-glycosylase/DNA lyase (AGOG) family.

The catalysed reaction is 2'-deoxyribonucleotide-(2'-deoxyribose 5'-phosphate)-2'-deoxyribonucleotide-DNA = a 3'-end 2'-deoxyribonucleotide-(2,3-dehydro-2,3-deoxyribose 5'-phosphate)-DNA + a 5'-end 5'-phospho-2'-deoxyribonucleoside-DNA + H(+). Its function is as follows. DNA repair enzyme that is part of the base excision repair (BER) pathway; protects from oxidative damage by removing the major product of DNA oxidation, 8-oxoguanine (GO), from single- and double-stranded DNA substrates. This Methanopyrus kandleri (strain AV19 / DSM 6324 / JCM 9639 / NBRC 100938) protein is N-glycosylase/DNA lyase.